The primary structure comprises 467 residues: tRNA dimethylallyltransferase (467 aa).

The transit peptide at 1-47 (MASVAAARAVPVGSGLRGLQRTLPLVVILGATGTGKSTLALQLGQRL) directs the protein to the mitochondrion. 32 to 37 (TGTGKS) serves as a coordination point for dimethylallyl diphosphate. Interaction with substrate tRNA stretches follow at residues 55–58 (DSMQ) and 183–187 (RKVAR). The interval 221 to 230 (FSNPCILWLH) is core aggregation region. Residues 233 to 255 (QAVLDERLDKRVDDMLAAGLLEE) form an interaction with isopentenylpyrophosphate transferase region. Interaction with substrate tRNA stretches follow at residues 281 to 283 (QSI) and 313 to 331 (ALKQ…WVKN). Residues 395–425 (HLCDLCDRIIIGDREWAAHIKSKSHLNQLKK) form a Matrin-type zinc finger. The interval 429–467 (LDSDAVNTIESQSVSPDHNKEPKEKGSPGQNDQELKCSV) is disordered. Residues 433 to 444 (AVNTIESQSVSP) are compositionally biased toward polar residues. Phosphoserine is present on S443. Positions 445 to 454 (DHNKEPKEKG) are enriched in basic and acidic residues. The residue at position 455 (S455) is a Phosphoserine.

The protein belongs to the IPP transferase family.

It localises to the mitochondrion. Its subcellular location is the cytoplasm. The catalysed reaction is adenosine(37) in tRNA + dimethylallyl diphosphate = N(6)-dimethylallyladenosine(37) in tRNA + diphosphate. Functionally, catalyzes the transfer of a dimethylallyl group onto the adenine at position 37 of both cytosolic and mitochondrial tRNAs, leading to the formation of N6-(dimethylallyl)adenosine (i6A37). Mediates modification of a limited subset of tRNAs: tRNA(Ser)(AGA), tRNA(Ser)(CGA), tRNA(Ser)(UGA), as well as partial modification of the selenocysteine tRNA(Ser)(UCA). TRIT1 is therefore required for selenoprotein expression. In Homo sapiens (Human), this protein is tRNA dimethylallyltransferase (TRIT1).